A 341-amino-acid polypeptide reads, in one-letter code: Muscleblind-like protein 1 (341 aa).

Thr-6 carries the post-translational modification Phosphothreonine. 4 consecutive C3H1-type zinc fingers follow at residues 13-41 (WLTL…HPSK), 47-73 (NGRV…HPPP), 178-206 (TDRL…HPAD), and 214-240 (DNTV…HPPA).

Belongs to the muscleblind family. Interacts with DDX1 and YBX1. Interacts with HNRNPH1; the interaction in RNA-independent. Interacts with RBPMS; the interaction allows cooperative assembly of RNA-bound stable cell-specific alternative splicing regulatory complexes. In terms of tissue distribution, highly expressed in cardiac and skeletal muscle. Weakly expressed in heart and eye (at protein level).

The protein resides in the nucleus. The protein localises to the cytoplasm. Its subcellular location is the cytoplasmic granule. Mediates pre-mRNA alternative splicing regulation. Acts either as activator or repressor of splicing on specific pre-mRNA targets. Inhibits cardiac troponin-T (TNNT2) pre-mRNA exon inclusion but induces insulin receptor (IR) pre-mRNA exon inclusion in muscle. Antagonizes the alternative splicing activity pattern of CELF proteins. Regulates the TNNT2 exon 5 skipping through competition with U2AF2. Inhibits the formation of the spliceosome A complex on intron 4 of TNNT2 pre-mRNA. Binds to the stem-loop structure within the polypyrimidine tract of TNNT2 intron 4 during spliceosome assembly. Binds to the 5'-YGCU(U/G)Y-3'consensus sequence. Binds to the IR RNA. Binds to CUG triplet repeat expansion in myotonic dystrophy muscle cells by sequestering the target RNAs. Together with RNA binding proteins RBPMS and RBFOX2, activates vascular smooth muscle cells alternative splicing events. Regulates NCOR2 alternative splicing. This Mus musculus (Mouse) protein is Muscleblind-like protein 1 (Mbnl1).